The sequence spans 588 residues: Aspartate--tRNA ligase (588 aa).

Glu177 lines the L-aspartate pocket. Residues 201 to 204 form an aspartate region; sequence QIFK. Arg223 lines the L-aspartate pocket. ATP-binding positions include 223-225 and Gln232; that span reads RDE. An L-aspartate-binding site is contributed by His451. Glu485 is a binding site for ATP. Residue Arg492 participates in L-aspartate binding. 537–540 is a binding site for ATP; it reads GLDR.

The protein belongs to the class-II aminoacyl-tRNA synthetase family. Type 1 subfamily. In terms of assembly, homodimer.

It localises to the cytoplasm. The enzyme catalyses tRNA(Asp) + L-aspartate + ATP = L-aspartyl-tRNA(Asp) + AMP + diphosphate. Its function is as follows. Catalyzes the attachment of L-aspartate to tRNA(Asp) in a two-step reaction: L-aspartate is first activated by ATP to form Asp-AMP and then transferred to the acceptor end of tRNA(Asp). The polypeptide is Aspartate--tRNA ligase (Staphylococcus saprophyticus subsp. saprophyticus (strain ATCC 15305 / DSM 20229 / NCIMB 8711 / NCTC 7292 / S-41)).